The chain runs to 296 residues: Nucleotide-binding protein stu0831 (296 aa).

13-20 (GMSGAGKT) provides a ligand contact to ATP. Position 63-66 (63-66 (DMRS)) interacts with GTP.

It belongs to the RapZ-like family.

In terms of biological role, displays ATPase and GTPase activities. The protein is Nucleotide-binding protein stu0831 of Streptococcus thermophilus (strain ATCC BAA-250 / LMG 18311).